The primary structure comprises 443 residues: Tol-Pal system protein TolB (443 aa).

Residues 1–33 (MKIGIINTKIRTVFSAFACMIAASLVCTMPARA) form the signal peptide.

This sequence belongs to the TolB family. The Tol-Pal system is composed of five core proteins: the inner membrane proteins TolA, TolQ and TolR, the periplasmic protein TolB and the outer membrane protein Pal. They form a network linking the inner and outer membranes and the peptidoglycan layer.

The protein localises to the periplasm. Part of the Tol-Pal system, which plays a role in outer membrane invagination during cell division and is important for maintaining outer membrane integrity. The polypeptide is Tol-Pal system protein TolB (Brucella ovis (strain ATCC 25840 / 63/290 / NCTC 10512)).